Reading from the N-terminus, the 159-residue chain is Probable histone H2A.5 (159 aa).

A compositionally biased stretch (gly residues) spans 1-10 (MDAAGAGAGG). 2 disordered regions span residues 1-29 (MDAA…KKAV) and 136-159 (EKAA…PKKA). Basic residues-rich tracts occupy residues 11 to 29 (KLKK…KKAV) and 148 to 159 (PKKAAGKSPKKA). 2 short sequence motifs (SPKK motif) span residues 147–150 (SPKK) and 155–158 (SPKK).

This sequence belongs to the histone H2A family. In terms of assembly, the nucleosome is a histone octamer containing two molecules each of H2A, H2B, H3 and H4 assembled in one H3-H4 heterotetramer and two H2A-H2B heterodimers. The octamer wraps approximately 147 bp of DNA.

The protein resides in the nucleus. Its subcellular location is the chromosome. Core component of nucleosome. Nucleosomes wrap and compact DNA into chromatin, limiting DNA accessibility to the cellular machineries which require DNA as a template. Histones thereby play a central role in transcription regulation, DNA repair, DNA replication and chromosomal stability. DNA accessibility is regulated via a complex set of post-translational modifications of histones, also called histone code, and nucleosome remodeling. In Oryza sativa subsp. indica (Rice), this protein is Probable histone H2A.5.